A 673-amino-acid chain; its full sequence is Ion-translocating oxidoreductase complex subunit C (673 aa).

2 4Fe-4S ferredoxin-type domains span residues 368-397 (MGAPQEEKSCIRCSACADACPADLLPQQLY) and 407-436 (KATAHHIADCIECGACAWVCPSNIPLVQYF). Residues C377, C380, C383, C387, C416, C419, C422, and C426 each contribute to the [4Fe-4S] cluster site. Disordered regions lie at residues 534–553 (QARAKQAAHPVADSAISGGA) and 563–653 (IARA…AAVA).

It belongs to the 4Fe4S bacterial-type ferredoxin family. RnfC subfamily. In terms of assembly, the complex is composed of six subunits: RsxA, RsxB, RsxC, RsxD, RsxE and RsxG. Requires [4Fe-4S] cluster as cofactor.

Its subcellular location is the cell inner membrane. In terms of biological role, part of a membrane-bound complex that couples electron transfer with translocation of ions across the membrane. Required to maintain the reduced state of SoxR. This is Ion-translocating oxidoreductase complex subunit C from Salmonella gallinarum (strain 287/91 / NCTC 13346).